Consider the following 152-residue polypeptide: Large ribosomal subunit protein bL9 (152 aa).

It belongs to the bacterial ribosomal protein bL9 family.

Its function is as follows. Binds to the 23S rRNA. This is Large ribosomal subunit protein bL9 from Nostoc sp. (strain PCC 7120 / SAG 25.82 / UTEX 2576).